The primary structure comprises 712 residues: Interleukin-1 receptor-associated kinase 1 (712 aa).

A Death domain is found at 27-106; sequence MCRFYKVMDA…DIITAWHPPA (80 aa). At Thr-66 the chain carries Phosphothreonine; by PKC/PRKCI. Residues 105 to 187 form a disordered region; the sequence is PAPLPSPGTT…STKPGPESSV (83 aa). The segment at 110 to 211 is proST region; that stretch reads SPGTTAPRPS…LCEISRGTHN (102 aa). The segment covering 115 to 133 has biased composition (low complexity); that stretch reads APRPSSIPAPAEAEAWSPR. Ser-131 is subject to Phosphoserine. Lys-134 is covalently cross-linked (Glycyl lysine isopeptide (Lys-Gly) (interchain with G-Cter in ubiquitin)). Residues 137 to 154 show a composition bias toward polar residues; it reads SSASTFLSPAFPGSQTHS. Lys-180 participates in a covalent cross-link: Glycyl lysine isopeptide (Lys-Gly) (interchain with G-Cter in ubiquitin). Residue Thr-209 is modified to Phosphothreonine; by IRAK4. Residues 212-521 form the Protein kinase domain; sequence FSEELKIGEG…TQVYERLEKL (310 aa). Residues 218 to 226 and Lys-239 each bind ATP; that span reads IGEGGFGCV. Asp-340 serves as the catalytic Proton acceptor. ATP is bound by residues 342–345 and Asp-358; that span reads KSSN. Residues Ser-371 and Ser-375 each carry the phosphoserine modification. Thr-387 carries the post-translational modification Phosphothreonine. Disordered stretches follow at residues 532 to 591, 613 to 660, and 690 to 712; these read SEAA…SDES, APLR…PPQI, and SSLPGLGLEQDRQGPEESDEFQS. Residues 543–553 are compositionally biased toward polar residues; that stretch reads QENSYVSSTGR. Ser-556 bears the Phosphoserine mark. Low complexity-rich tracts occupy residues 562–575 and 643–658; these read QPLAAPSGASAQAA and EGLALGSSASSSSEPP.

Belongs to the protein kinase superfamily. TKL Ser/Thr protein kinase family. Pelle subfamily. As to quaternary structure, homodimer. Forms a complex with TRAF6, PELI1, IRAK4 and MYD88. Direct binding of SMAD6 to PELI1 prevents complex formation and hence negatively regulates IL1R-TLR signaling and eventually NF-kappa-B-mediated gene expression. The TRAF6-PELI1-IRAK4-MYD88 complex recruits MAP3K7/TAK1, TAB1 and TAB2 to mediate NF-kappa-B activation. Interaction with MYD88 recruits IRAK1 to the stimulated receptor complex. Interacts with TOLLIP; this interaction occurs in the cytosol prior to receptor activation. Interacts with IL1RL1. Interacts with PELI1 and TRAF6. Interacts (when polyubiquitinated) with IKBKG/NEMO. Interacts with RSAD2/viperin. Interacts with IRAK1BP1. Interacts with PELI2. Interacts with ZC3H12A; this interaction increases the interaction between ZC3H12A and IKBKB/IKKB. Interacts with IRAK4. Interacts with PELI3. Interacts with INAVA; the interaction takes place upon PRR stimulation. Interacts (via C-terminus) with NFATC4 (via N-terminus). In terms of assembly, (Microbial infection) Interacts with mumps virus protein SH; this interaction inhibits downstream NF-kappa-B pathway activation. (Microbial infection) Interacts with alphaviruses SINV, CHIKV, RRV, VEEV and EEEV capsid proteins; the interactions lead to inhibition of IRAK1-dependent signaling. Requires Mg(2+) as cofactor. In terms of processing, following recruitment on the activated receptor complex, phosphorylated on Thr-209, probably by IRAK4, resulting in a conformational change of the kinase domain, allowing further phosphorylations to take place. Thr-387 phosphorylation in the activation loop is required to achieve full enzymatic activity. Polyubiquitinated by TRAF6 after cell stimulation with IL-1-beta by PELI1, PELI2 and PELI3. Polyubiquitination occurs with polyubiquitin chains linked through 'Lys-63'. Ubiquitination promotes interaction with NEMO/IKBKG. Also sumoylated; leading to nuclear translocation. Isoform 1 and isoform 2 are ubiquitously expressed in all tissues examined, with isoform 1 being more strongly expressed than isoform 2.

It is found in the cytoplasm. It localises to the nucleus. The protein resides in the lipid droplet. The catalysed reaction is L-seryl-[protein] + ATP = O-phospho-L-seryl-[protein] + ADP + H(+). The enzyme catalyses L-threonyl-[protein] + ATP = O-phospho-L-threonyl-[protein] + ADP + H(+). Serine/threonine-protein kinase that plays a critical role in initiating innate immune response against foreign pathogens. Involved in Toll-like receptor (TLR) and IL-1R signaling pathways. Is rapidly recruited by MYD88 to the receptor-signaling complex upon TLR activation. Association with MYD88 leads to IRAK1 phosphorylation by IRAK4 and subsequent autophosphorylation and kinase activation. Phosphorylates E3 ubiquitin ligases Pellino proteins (PELI1, PELI2 and PELI3) to promote pellino-mediated polyubiquitination of IRAK1. Then, the ubiquitin-binding domain of IKBKG/NEMO binds to polyubiquitinated IRAK1 bringing together the IRAK1-MAP3K7/TAK1-TRAF6 complex and the NEMO-IKKA-IKKB complex. In turn, MAP3K7/TAK1 activates IKKs (CHUK/IKKA and IKBKB/IKKB) leading to NF-kappa-B nuclear translocation and activation. Alternatively, phosphorylates TIRAP to promote its ubiquitination and subsequent degradation. Phosphorylates the interferon regulatory factor 7 (IRF7) to induce its activation and translocation to the nucleus, resulting in transcriptional activation of type I IFN genes, which drive the cell in an antiviral state. When sumoylated, translocates to the nucleus and phosphorylates STAT3. This chain is Interleukin-1 receptor-associated kinase 1, found in Homo sapiens (Human).